The sequence spans 130 residues: Small ribosomal subunit protein uS9 (130 aa).

The protein belongs to the universal ribosomal protein uS9 family.

This Xanthomonas oryzae pv. oryzae (strain MAFF 311018) protein is Small ribosomal subunit protein uS9.